A 453-amino-acid polypeptide reads, in one-letter code: Ribosomal protein uS12 methylthiotransferase RimO (453 aa).

The region spanning 9-124 is the MTTase N-terminal domain; sequence PKVGFVSLGC…VMEAVHTHLP (116 aa). 6 residues coordinate [4Fe-4S] cluster: cysteine 18, cysteine 54, cysteine 83, cysteine 155, cysteine 159, and cysteine 162. Residues 141 to 382 form the Radical SAM core domain; it reads LTPKHYAYLK…MEVAERVSAR (242 aa). The TRAM domain maps to 385 to 453; it reads QRKVGKTLRV…ADGHDLWGEV (69 aa).

This sequence belongs to the methylthiotransferase family. RimO subfamily. The cofactor is [4Fe-4S] cluster.

The protein localises to the cytoplasm. The enzyme catalyses L-aspartate(89)-[ribosomal protein uS12]-hydrogen + (sulfur carrier)-SH + AH2 + 2 S-adenosyl-L-methionine = 3-methylsulfanyl-L-aspartate(89)-[ribosomal protein uS12]-hydrogen + (sulfur carrier)-H + 5'-deoxyadenosine + L-methionine + A + S-adenosyl-L-homocysteine + 2 H(+). Catalyzes the methylthiolation of an aspartic acid residue of ribosomal protein uS12. This Ralstonia nicotianae (strain ATCC BAA-1114 / GMI1000) (Ralstonia solanacearum) protein is Ribosomal protein uS12 methylthiotransferase RimO.